The primary structure comprises 58 residues: MFELDAQRLAERIDTVLDILVAGDTHSAIHNLEILKAELLSKVKDNAQSGTPKSPWEI.

It belongs to the UPF0509 family.

The chain is UPF0509 protein YciZ from Escherichia fergusonii (strain ATCC 35469 / DSM 13698 / CCUG 18766 / IAM 14443 / JCM 21226 / LMG 7866 / NBRC 102419 / NCTC 12128 / CDC 0568-73).